Reading from the N-terminus, the 342-residue chain is Heat-inducible transcription repressor HrcA (342 aa).

Belongs to the HrcA family.

Negative regulator of class I heat shock genes (grpE-dnaK-dnaJ and groELS operons). Prevents heat-shock induction of these operons. The polypeptide is Heat-inducible transcription repressor HrcA (Methylibium petroleiphilum (strain ATCC BAA-1232 / LMG 22953 / PM1)).